Consider the following 451-residue polypeptide: V-type proton ATPase subunit S1 (451 aa).

Positions 1-16 (MRVLFAVFSLIMACQA) are cleaved as a signal peptide. The Lumenal segment spans residues 17–407 (YDAVLFSNSR…DCTGTFSSGS (391 aa)). N191, N235, N249, and N330 each carry an N-linked (GlcNAc...) asparagine glycan. A helical transmembrane segment spans residues 408-428 (WMGIVSALVLIAGLMFGYVML). At 429–451 (QSVQTMDRFDDPKQRQIVINVRE) the chain is on the cytoplasmic side.

This sequence belongs to the vacuolar ATPase subunit S1 family. As to quaternary structure, accessory component of the multisubunit proton-transporting vacuolar (V)-ATPase protein pump. As to expression, expressed in pharynx, hypodermis, intestine, vulval hypodermis and the H-shape excretory cell.

It is found in the membrane. Functionally, accessory subunit of the proton-transporting vacuolar (V)-ATPase protein pump, which is required for luminal acidification of secretory vesicles. In the germline, required for the trafficking of the receptor RME-2 to the oocyte cell membrane where it regulates the uptake of yolk proteins. Also, plays an essential role in osmoregulation in the embryo, probably by regulating the proper formation of the eggshell. This Caenorhabditis elegans protein is V-type proton ATPase subunit S1.